The following is a 476-amino-acid chain: uncharacterized protein (476 aa).

10 helical membrane-spanning segments follow: residues 4 to 24, 81 to 101, 141 to 161, 174 to 194, 207 to 227, 233 to 253, 300 to 320, 351 to 371, 391 to 411, and 414 to 434; these read FFSF…LFGA, ALAI…AAFI, WMGV…FSGV, FDFP…LAIT, FVPL…VMNI, VIWS…GAAG, MIGI…LILL, FVTL…YIYA, ICTF…MWQL, and IIMA…SPVV.

It belongs to the alanine or glycine:cation symporter (AGCS) (TC 2.A.25) family.

Its subcellular location is the cell inner membrane. This is an uncharacterized protein from Escherichia coli (strain K12).